A 223-amino-acid chain; its full sequence is Alpha-S2-casein (223 aa).

The signal sequence occupies residues 1–15 (MKLFIFTCLLAVALA). Phosphoserine is present on residues Ser23, Ser24, Ser25, Ser28, Ser46, Ser71, Ser72, and Ser73. 2 consecutive repeats follow at residues 76–128 (FADI…TLGK) and 129–223 (EQIS…ERQA). Phosphoserine is present on residues Ser132, Ser147, and Ser155.

This sequence belongs to the alpha-casein family. In terms of tissue distribution, mammary gland specific. Secreted in milk.

Its subcellular location is the secreted. Functionally, important role in the capacity of milk to transport calcium phosphate. This chain is Alpha-S2-casein (CSN1S2), found in Cavia porcellus (Guinea pig).